We begin with the raw amino-acid sequence, 399 residues long: Glucose-1-phosphate adenylyltransferase (399 aa).

Residues G158, 174-175, and S192 contribute to the alpha-D-glucose 1-phosphate site; that span reads EK.

This sequence belongs to the bacterial/plant glucose-1-phosphate adenylyltransferase family. Homotetramer.

It carries out the reaction alpha-D-glucose 1-phosphate + ATP + H(+) = ADP-alpha-D-glucose + diphosphate. It functions in the pathway glycan biosynthesis; glycogen biosynthesis. In terms of biological role, involved in the biosynthesis of ADP-glucose, a building block required for the elongation reactions to produce glycogen. Catalyzes the reaction between ATP and alpha-D-glucose 1-phosphate (G1P) to produce pyrophosphate and ADP-Glc. This Streptomyces coelicolor (strain ATCC BAA-471 / A3(2) / M145) protein is Glucose-1-phosphate adenylyltransferase.